The chain runs to 2837 residues: Probable polyketide synthase 3 (2837 aa).

The Ketosynthase family 3 (KS3) domain maps to 39-464 (NNGIGIIGIG…GSNVCIILKD (426 aa)). Active-site for beta-ketoacyl synthase activity residues include Cys209, His348, and His388. The tract at residues 664 to 697 (GIKPTFIVGHSLGEVTAAYCSGMIDLETECYLIY) is acyl/malonyl transferase. The active-site For acyl/malonyl transferase activity is the Ser674. Residues 962-1084 (IDILGNSITD…GNFQLFKHNG (123 aa)) form an N-terminal hotdog fold region. The region spanning 962 to 1255 (IDILGNSITD…CTSLTPIQDS (294 aa)) is the PKS/mFAS DH domain. His995 acts as the Proton acceptor; for dehydratase activity in catalysis. Residues 1106 to 1255 (NLTKLTKEDL…CTSLTPIQDS (150 aa)) form a C-terminal hotdog fold region. Asp1169 (proton donor; for dehydratase activity) is an active-site residue. In terms of domain architecture, Carrier spans 2330–2407 (DNKNSVNQMF…SSIKIITNSL (78 aa)). Ser2367 is subject to O-(pantetheine 4'-phosphoryl)serine. Residues 2464–2484 (KVILLSGSTGFLGGYLLLNLV) traverse the membrane as a helical segment.

Pantetheine 4'-phosphate is required as a cofactor.

The protein localises to the membrane. Its function is as follows. Probable polyketide synthase. This Dictyostelium discoideum (Social amoeba) protein is Probable polyketide synthase 3 (pks3).